The following is a 426-amino-acid chain: MEPSSWSGSESPAENMERMSDSADKPIDNDAEGVWSPDIEQSFQEALAIYPPCGRRKIILSDEGKMYGRNELIARYIKLRTGKTRTRKQVSSHIQVLARRKSRDFHSKLKDQTAKDKALQHMAAMSSAQIVSATAIHNKLGLPGIPRPTFPGGPGFWPGMIQTGQPGSSQDVKPFVQQAYPIQPAVTAPIPGFEPTSAPAPSVPAWQGRSIGTTKLRLVEFSAFLEQQRDPDSYNKHLFVHIGHANHSYSDPLLESVDIRQIYDKFPEKKGGLKELFGKGPQNAFFLVKFWADLNCNIQDDAGAFYGVSSQYESSENMTVTCSTKVCSFGKQVVEKVETEYARFENGRFVYRINRSPMCEYMINFIHKLKHLPEKYMMNSVLENFTILLVVTNRDTQETLLCMACVFEVSNSEHGAQHHIYRLVKD.

An N-acetylmethionine modification is found at M1. A compositionally biased stretch (polar residues) spans 1 to 12 (MEPSSWSGSESP). The disordered stretch occupies residues 1 to 31 (MEPSSWSGSESPAENMERMSDSADKPIDNDA). Position 11 is a phosphoserine (S11). The span at 15–28 (NMERMSDSADKPID) shows a compositional bias: basic and acidic residues. A DNA-binding region (TEA) is located at residues 28–104 (DNDAEGVWSP…QVLARRKSRD (77 aa)). An N6-lactoyllysine modification is found at K108. The segment at 167–426 (GSSQDVKPFV…QHHIYRLVKD (260 aa)) is transcriptional activation.

Interacts with YAP1 and WWTR1/TAZ. Post-translationally, lactylation by AARS1 promotes nuclear localization and stabilization of YAP1, leading to increased Hippo signaling pathway. Delactylated by SIRT1. In developing skeletal muscle and myocardium, in mitotic neuroblasts both in the brain and spinal cord. At later stages of embryogenesis expressed in several developing structures such as the olfactory system, the intestine, and the kidney.

The protein localises to the nucleus. Its function is as follows. Transcription factor which plays a key role in the Hippo signaling pathway, a pathway involved in organ size control and tumor suppression by restricting proliferation and promoting apoptosis. The core of this pathway is composed of a kinase cascade wherein MST1/MST2, in complex with its regulatory protein SAV1, phosphorylates and activates LATS1/2 in complex with its regulatory protein MOB1, which in turn phosphorylates and inactivates YAP1 oncoprotein and WWTR1/TAZ. Acts by mediating gene expression of YAP1 and WWTR1/TAZ, thereby regulating cell proliferation, migration and epithelial mesenchymal transition (EMT) induction. Binds specifically and cooperatively to the SPH and GT-IIC 'enhansons' (5'-GTGGAATGT-3') and activates transcription in vivo in a cell-specific manner. The activation function appears to be mediated by a limiting cell-specific transcriptional intermediary factor (TIF). Involved in cardiac development. Binds to the M-CAT motif. This chain is Transcriptional enhancer factor TEF-1 (Tead1), found in Mus musculus (Mouse).